A 448-amino-acid polypeptide reads, in one-letter code: Protein chibby homolog 2 (448 aa).

S41, S86, S89, S97, S124, S144, S148, and S150 each carry phosphoserine. The stretch at 163–198 forms a coiled coil; it reads AKEFVLQEENKSLREENKALREENRMLRKENKILQV. The interval 206–226 is disordered; it reads SLGREESRPPSPLPQKDSASL. Phosphoserine is present on residues S212 and S225. The stretch at 242–267 forms a coiled coil; sequence KEDSTLQLLREENRALQQLLEQKQAY. Residues 270–321 form a disordered region; that stretch reads QTEDAAAPAEESKPAPSPHEEPCSPGLLQDQGSGLSSHFEEPRGPPAPQEDS. Residues 279–291 are compositionally biased toward basic and acidic residues; it reads EESKPAPSPHEEP. Phosphoserine is present on residues S335 and S338. Residues 356 to 414 adopt a coiled-coil conformation; sequence LQLLREMRQALQALLKENRLLQEENRTLQVLRAEHRGFQEENKALWENNKLKLQQKLVI.

This sequence belongs to the chibby family. SPERT subfamily. In terms of assembly, homodimer. Binds to NEK1.

In Macaca fascicularis (Crab-eating macaque), this protein is Protein chibby homolog 2 (CBY2).